A 170-amino-acid polypeptide reads, in one-letter code: uncharacterized protein (170 aa).

The tract at residues 35–57 is disordered; it reads EEVMPATAPSTDPAVPKDAQEAD.

This is an uncharacterized protein from Candida tsukubaensis (Yeast).